We begin with the raw amino-acid sequence, 261 residues long: Kallikrein 1-related peptidase b9 (261 aa).

The signal sequence occupies residues 1 to 18 (MRFLILFLALSLGGIDAA). The propeptide at 19–24 (PPVHSR) is activation peptide. Residues 25–258 (IVGGFKCEKN…FTSWIKDTMA (234 aa)) enclose the Peptidase S1 domain. Cystine bridges form between Cys-31-Cys-173, Cys-50-Cys-66, Cys-152-Cys-219, Cys-184-Cys-198, and Cys-209-Cys-234. His-65 acts as the Charge relay system in catalysis. Asn-102 carries N-linked (GlcNAc...) asparagine glycosylation. Asp-120 functions as the Charge relay system in the catalytic mechanism. Ser-213 (charge relay system) is an active-site residue.

This sequence belongs to the peptidase S1 family. Kallikrein subfamily.

It carries out the reaction Preferential cleavage of Arg-|-Xaa bonds in small molecule substrates. Highly selective action to release kallidin (lysyl-bradykinin) from kininogen involves hydrolysis of Met-|-Xaa or Leu-|-Xaa.. In terms of biological role, glandular kallikreins cleave Met-Lys and Arg-Ser bonds in kininogen to release Lys-bradykinin. This chain is Kallikrein 1-related peptidase b9 (Klk1b9), found in Mus musculus (Mouse).